Here is a 58-residue protein sequence, read N- to C-terminus: Cholecystokinins (58 aa).

Sulfotyrosine is present on Tyr52. Phe58 is modified (phenylalanine amide).

It belongs to the gastrin/cholecystokinin family. In terms of assembly, binds to CCK-A receptors in the pancreas and CCK-B receptors in the brain. cholecystokinin 8 binds CCK-A receptors more potently than cholecystokinin 58, cholecystokinin 8 and cholecystokinin 58 bind CCK-B receptors with equal affinity. The precursor is cleaved by proteases to produce a number of active cholecystokinins. In terms of processing, cholecystokinin 58 occurs in both sulfated (CCK58(s)) and nonsulfated (CCK58(ns)) forms, which differ in their receptor-binding activities. CCK58(s) binds to the CCK-A receptor with high affinity, CCK58(ns) binds poorly to the CCK-A receptor. CCK58(s) and CCK58(ns) both bind the CCK-B receptor. Post-translationally, the precursor is cleaved by ACE, which removes the Gly-Arg-Arg peptide at the C-terminus, leading to mature hormone.

It is found in the secreted. Its function is as follows. This peptide hormone induces gall bladder contraction and the release of pancreatic enzymes in the gut. Its function in the brain is not clear. Binding to CCK-A receptors stimulates amylase release from the pancreas, binding to CCK-B receptors stimulates gastric acid secretion. cholecystokinin 58 and cholecystokinin 8, but not cholecystokinin 58 desnonopeptide, stimulate amylase release from the pancreas. cholecystokinin 58, but not cholecystokinin 8, increases bile-pancreatic volume. The sequence is that of Cholecystokinins from Canis lupus familiaris (Dog).